A 318-amino-acid polypeptide reads, in one-letter code: Homeobox protein Nkx-2.5 (318 aa).

A DNA-binding region (homeobox) is located at residues 137 to 196 (RRKPRVLFSQAQVYELERRFKQQRYLSPAERDQLASVLKLTSTQVKIWFQNRRYKCKRQR).

Belongs to the NK-2 homeobox family. As to quaternary structure, homodimer (via the homeobox); binds DNA as homodimer. Interacts (via the homeobox) with TBX5 (via the T-box); this complex binds DNA. Interacts with HIPK1 and HIPK2, but not HIPK3. Interacts with the C-terminal zinc finger of GATA4 through its homeobox domain. Also interacts with JARID2 which represses its ability to activate transcription of ANF. Interacts with FBLIM1. Interacts with TBX18. Interacts with histone methyltransferase NSD2 (via HMG box). Interacts with NEDD9. Interacts with TBX1.

It localises to the nucleus. Functionally, transcription factor required for the development of the heart and the spleen. During heart development, acts as a transcriptional activator of NPPA/ANF in cooperation with GATA4. May cooperate with TBX2 to negatively modulate expression of NPPA/ANF in the atrioventricular canal. Binds to the core DNA motif of NPPA promoter. Together with PBX1, required for spleen development through a mechanism that involves CDKN2B repression. Positively regulates transcription of genes such as COL3A1 and MMP2, resulting in increased pulmonary endothelial fibrosis in response to hypoxia. The sequence is that of Homeobox protein Nkx-2.5 (Nkx2-5) from Rattus norvegicus (Rat).